The chain runs to 628 residues: WW domain-containing adapter protein with coiled-coil (628 aa).

Disordered stretches follow at residues 1–130, 152–338, and 417–532; these read MVMY…DDWS, EKPK…PQSP, and NQSP…SARS. The span at 37 to 49 shows a compositional bias: basic and acidic residues; the sequence is SSDHRHDKMRDST. Over residues 74–84 the composition is skewed to basic residues; that stretch reads GKAKSMHLHRV. A compositionally biased stretch (low complexity) spans 101–121; sequence NHSAIHSSNSHSSTPSKTSDS. Positions 123–156 constitute a WW domain; sequence YDPADDWSEHISSSGKKYYYNCRTEVSQWEKPKE. 2 stretches are compositionally biased toward basic and acidic residues: residues 152–168 and 176–185; these read EKPK…KETS and PKDRDYRREA. Positions 199-213 are enriched in polar residues; it reads DTSTMLPQNILSQTS. Positions 214 to 227 are enriched in basic and acidic residues; sequence RHNDRDYRLPRTDS. 2 stretches are compositionally biased toward low complexity: residues 230 to 260 and 299 to 331; these read SAAP…TVQP and SDKS…TVPV. Polar residues predominate over residues 420–446; it reads PMSLTSDASSPRSYVSPRISTPQTNTV. Residues 467-486 are compositionally biased toward low complexity; the sequence is GSKQGSSAQTASQQSSAADK. Residues 511-532 are compositionally biased toward polar residues; it reads PNHNSSTCASSTSAPQNSSARS. A coiled-coil region spans residues 599 to 625; sequence QATLREQRILFLRQQIKELEKLKNQNS.

It localises to the nucleus. Its function is as follows. Acts as a linker between gene transcription and histone H2B monoubiquitination at 'Lys-120' (H2BK120ub1). Positive regulator of amino acid starvation-induced autophagy. Positively regulates MTOR activity. May negatively regulate the ubiquitin proteasome pathway. This is WW domain-containing adapter protein with coiled-coil (wac) from Xenopus tropicalis (Western clawed frog).